Reading from the N-terminus, the 151-residue chain is MEKKKIVVTAGTFDILHPGHYEILKFAKSLGDELIVIVARDETVKKLKGRKPIIPEEQRREMVEALKPVDKAVLGSLKNKLEPILKLKPDIIVLGPDQTTFDEETLKQELAKYNLYPEIVRFRGYKKCPFHSSFDIVKEIIRRFCSKEIKI.

Residues 12–13 (TF), 17–20 (HPGH), aspartate 97, and tyrosine 125 each bind ATP.

This sequence belongs to the archaeal FAD synthase family. In terms of assembly, homodimer. A divalent metal cation serves as cofactor.

It catalyses the reaction FMN + ATP + H(+) = FAD + diphosphate. It functions in the pathway cofactor biosynthesis; FAD biosynthesis; FAD from FMN: step 1/1. Catalyzes the transfer of the AMP portion of ATP to flavin mononucleotide (FMN) to produce flavin adenine dinucleotide (FAD) coenzyme. The polypeptide is FAD synthase (Methanocaldococcus sp. (strain FS406-22)).